The chain runs to 232 residues: MQNIFLAATLLGAAFAAPQNPPTSCSAAPQPTGTGSPGTVCGSTTFTNYTVKAGDTLGAIAKQYNSGVCDIAKVNGIDNPDYIKPDQVLSIPANCVTPDNTSCVKPVPVITNTCVLGVGSTYTVKSGDSFSAIATSFNITLASLEARNPQIPNYDLIFPGQVINTPLCPNSVCDSIGTYVIESGDIFYNLAQSNNVTVGQLESLNVNVNVTDIHPGDIIILPHNCHNITASA.

The signal sequence occupies residues 1-16 (MQNIFLAATLLGAAFA). One can recognise a LysM 1 domain in the interval 47 to 91 (TNYTVKAGDTLGAIAKQYNSGVCDIAKVNGIDNPDYIKPDQVLSI). Residues Asn-48, Asn-100, Asn-138, Asn-195, Asn-209, and Asn-227 are each glycosylated (N-linked (GlcNAc...) asparagine). LysM domains follow at residues 120 to 165 (STYT…VINT) and 177 to 221 (GTYV…IIIL).

This sequence belongs to the secreted LysM effector family.

In terms of biological role, secreted effector that enables the plant pathogenic fungus to manipulate host defenses for successful infection. Binds chitin fragments and blocks the activation of chitin-induced plant defense responses. Protects fungal hyphae against hydrolytic plant enzymes. The protein is Secreted LysM effector Mg3LysM of Zymoseptoria tritici (strain CBS 115943 / IPO323) (Speckled leaf blotch fungus).